The sequence spans 281 residues: Formamidopyrimidine-DNA glycosylase (281 aa).

The active-site Schiff-base intermediate with DNA is P2. E3 (proton donor) is an active-site residue. Residue K58 is the Proton donor; for beta-elimination activity of the active site. DNA-binding residues include H94, R113, and R156. An FPG-type; degenerate zinc finger spans residues A241–R281. Catalysis depends on R271, which acts as the Proton donor; for delta-elimination activity.

This sequence belongs to the FPG family. In terms of assembly, monomer. Requires Zn(2+) as cofactor.

It catalyses the reaction Hydrolysis of DNA containing ring-opened 7-methylguanine residues, releasing 2,6-diamino-4-hydroxy-5-(N-methyl)formamidopyrimidine.. The catalysed reaction is 2'-deoxyribonucleotide-(2'-deoxyribose 5'-phosphate)-2'-deoxyribonucleotide-DNA = a 3'-end 2'-deoxyribonucleotide-(2,3-dehydro-2,3-deoxyribose 5'-phosphate)-DNA + a 5'-end 5'-phospho-2'-deoxyribonucleoside-DNA + H(+). Involved in base excision repair of DNA damaged by oxidation or by mutagenic agents. Acts as a DNA glycosylase that recognizes and removes damaged bases. Has a preference for oxidized purines, such as 7,8-dihydro-8-oxoguanine (8-oxoG). Has AP (apurinic/apyrimidinic) lyase activity and introduces nicks in the DNA strand. Cleaves the DNA backbone by beta-delta elimination to generate a single-strand break at the site of the removed base with both 3'- and 5'-phosphates. The polypeptide is Formamidopyrimidine-DNA glycosylase (Rhodospirillum rubrum (strain ATCC 11170 / ATH 1.1.1 / DSM 467 / LMG 4362 / NCIMB 8255 / S1)).